Consider the following 377-residue polypeptide: DNA replication and repair protein RecF (377 aa).

ATP is bound at residue 30 to 37 (GPNGQGKT).

It belongs to the RecF family.

It localises to the cytoplasm. Its function is as follows. The RecF protein is involved in DNA metabolism; it is required for DNA replication and normal SOS inducibility. RecF binds preferentially to single-stranded, linear DNA. It also seems to bind ATP. The protein is DNA replication and repair protein RecF of Thermobifida fusca (strain YX).